Reading from the N-terminus, the 101-residue chain is Small ribosomal subunit protein bS18c (101 aa).

This sequence belongs to the bacterial ribosomal protein bS18 family. As to quaternary structure, part of the 30S ribosomal subunit.

The protein localises to the plastid. The protein resides in the chloroplast. The polypeptide is Small ribosomal subunit protein bS18c (Carica papaya (Papaya)).